Consider the following 297-residue polypeptide: tRNA pseudouridine synthase A (297 aa).

Residue Asp-72 is the Nucleophile of the active site. Tyr-144 provides a ligand contact to substrate.

The protein belongs to the tRNA pseudouridine synthase TruA family. As to quaternary structure, homodimer.

The catalysed reaction is uridine(38/39/40) in tRNA = pseudouridine(38/39/40) in tRNA. Formation of pseudouridine at positions 38, 39 and 40 in the anticodon stem and loop of transfer RNAs. This is tRNA pseudouridine synthase A from Mycobacterium bovis (strain ATCC BAA-935 / AF2122/97).